The chain runs to 113 residues: Hydrogenase maturation factor HypA (113 aa).

Histidine 2 provides a ligand contact to Ni(2+). The Zn(2+) site is built by cysteine 73, cysteine 75, cysteine 89, and cysteine 92.

The protein belongs to the HypA/HybF family.

Its function is as follows. Involved in the maturation of [NiFe] hydrogenases. Required for nickel insertion into the metal center of the hydrogenase. This chain is Hydrogenase maturation factor HypA, found in Methanocella arvoryzae (strain DSM 22066 / NBRC 105507 / MRE50).